A 245-amino-acid polypeptide reads, in one-letter code: Acetoacetate decarboxylase (245 aa).

Lys-116 (schiff-base intermediate with acetoacetate) is an active-site residue.

The protein belongs to the ADC family.

The catalysed reaction is acetoacetate + H(+) = acetone + CO2. Functionally, catalyzes the conversion of acetoacetate to acetone and carbon dioxide. This Acidiphilium cryptum (strain JF-5) protein is Acetoacetate decarboxylase.